Consider the following 233-residue polypeptide: Pilin-like protein PilA3 (233 aa).

Residues 1-4 (MKRG) constitute a propeptide, leader sequence. Position 5 is an N-methylphenylalanine (Phe-5). A helical membrane pass occupies residues 5 to 25 (FTLVEVLVAMAILVVVLAVGV). The tract at residues 121–143 (LRRSDVNATPSSGSDCTTPPPNS) is disordered. Over residues 126 to 137 (VNATPSSGSDCT) the composition is skewed to polar residues.

It is found in the cell inner membrane. It localises to the cell outer membrane. Its subcellular location is the periplasm. Plays an essential role in natural DNA transformation but is not required for pilus biogenesis. The polypeptide is Pilin-like protein PilA3 (pilA3) (Thermus thermophilus (strain ATCC BAA-163 / DSM 7039 / HB27)).